The chain runs to 361 residues: S-adenosylmethionine:tRNA ribosyltransferase-isomerase (361 aa).

This sequence belongs to the QueA family. Monomer.

The protein localises to the cytoplasm. It carries out the reaction 7-aminomethyl-7-carbaguanosine(34) in tRNA + S-adenosyl-L-methionine = epoxyqueuosine(34) in tRNA + adenine + L-methionine + 2 H(+). It participates in tRNA modification; tRNA-queuosine biosynthesis. In terms of biological role, transfers and isomerizes the ribose moiety from AdoMet to the 7-aminomethyl group of 7-deazaguanine (preQ1-tRNA) to give epoxyqueuosine (oQ-tRNA). The sequence is that of S-adenosylmethionine:tRNA ribosyltransferase-isomerase from Haemophilus ducreyi (strain 35000HP / ATCC 700724).